The chain runs to 213 residues: MIKWLTRPADYAPVWQDMRAFTAGRGAATPDEVWLCEHAPVYTLGQAGKPEHLLNPGAIPVVMCDRGGQVTYHGPGQVVAYTLFDLRRAGLFVREYVRLLEDAAIGTLDDFGVPGACRKPGAPGVYVPLGPAGELAKIAALGIKIRNGYAYHGVALNVDMDLSPFLGINPCGYEGLVTVDMAACGVRRDLVDVGQRLAERLLAAMPEPAGATR.

The 183-residue stretch at 27–209 folds into the BPL/LPL catalytic domain; it reads AATPDEVWLC…RLLAAMPEPA (183 aa). Substrate contacts are provided by residues 66 to 73, 140 to 142, and 153 to 155; these read RGGQVTYH, ALG, and GVA. Cys-171 functions as the Acyl-thioester intermediate in the catalytic mechanism.

It belongs to the LipB family.

It localises to the cytoplasm. The catalysed reaction is octanoyl-[ACP] + L-lysyl-[protein] = N(6)-octanoyl-L-lysyl-[protein] + holo-[ACP] + H(+). The protein operates within protein modification; protein lipoylation via endogenous pathway; protein N(6)-(lipoyl)lysine from octanoyl-[acyl-carrier-protein]: step 1/2. Its function is as follows. Catalyzes the transfer of endogenously produced octanoic acid from octanoyl-acyl-carrier-protein onto the lipoyl domains of lipoate-dependent enzymes. Lipoyl-ACP can also act as a substrate although octanoyl-ACP is likely to be the physiological substrate. This Bordetella petrii (strain ATCC BAA-461 / DSM 12804 / CCUG 43448) protein is Octanoyltransferase.